Here is a 141-residue protein sequence, read N- to C-terminus: Large ribosomal subunit protein uL22 (141 aa).

This sequence belongs to the universal ribosomal protein uL22 family. Part of the 50S ribosomal subunit.

Its function is as follows. This protein binds specifically to 23S rRNA; its binding is stimulated by other ribosomal proteins, e.g. L4, L17, and L20. It is important during the early stages of 50S assembly. It makes multiple contacts with different domains of the 23S rRNA in the assembled 50S subunit and ribosome. Functionally, the globular domain of the protein is located near the polypeptide exit tunnel on the outside of the subunit, while an extended beta-hairpin is found that lines the wall of the exit tunnel in the center of the 70S ribosome. The sequence is that of Large ribosomal subunit protein uL22 from Frankia alni (strain DSM 45986 / CECT 9034 / ACN14a).